Consider the following 367-residue polypeptide: Small ribosomal subunit protein uS2 (367 aa).

A disordered region spans residues 1 to 68; the sequence is MPKKAEAKTG…NSTPSTGSKF (68 aa). A compositionally biased stretch (basic and acidic residues) spans 21–40; it reads AKKDVKAEVNETNKTAEKVS. A compositionally biased stretch (low complexity) spans 53-66; sequence TNESSSNSTPSTGS.

The protein belongs to the universal ribosomal protein uS2 family.

The protein is Small ribosomal subunit protein uS2 of Malacoplasma penetrans (strain HF-2) (Mycoplasma penetrans).